The primary structure comprises 146 residues: 3-hydroxyacyl-[acyl-carrier-protein] dehydratase FabZ (146 aa).

The active site involves H49.

This sequence belongs to the thioester dehydratase family. FabZ subfamily.

Its subcellular location is the cytoplasm. The enzyme catalyses a (3R)-hydroxyacyl-[ACP] = a (2E)-enoyl-[ACP] + H2O. In terms of biological role, involved in unsaturated fatty acids biosynthesis. Catalyzes the dehydration of short chain beta-hydroxyacyl-ACPs and long chain saturated and unsaturated beta-hydroxyacyl-ACPs. This Pseudomonas entomophila (strain L48) protein is 3-hydroxyacyl-[acyl-carrier-protein] dehydratase FabZ.